Consider the following 234-residue polypeptide: MRRAVIIPARLGSTRLKEKPLKNLLGKPLIRWVVEGLVKTGERVILATDSERVKEVVEDLCEVFLTPSDLPSGSDRVLYVVRDLDVDLIINYQGDEPFVYEEDIKLIFRELEKGERVVTLARKDKEAYERPEDVKVVLDREGYALYFSRSPIPYFRKNDTFYPLKHVGIYGFRKETLMEFGAMPPSKLEQIEGLEQLRLLENGIKIKVLITENYYHGVDTEEDLKIVEEKLKNL.

Belongs to the KdsB family.

The protein localises to the cytoplasm. The enzyme catalyses 3-deoxy-alpha-D-manno-oct-2-ulosonate + CTP = CMP-3-deoxy-beta-D-manno-octulosonate + diphosphate. It functions in the pathway nucleotide-sugar biosynthesis; CMP-3-deoxy-D-manno-octulosonate biosynthesis; CMP-3-deoxy-D-manno-octulosonate from 3-deoxy-D-manno-octulosonate and CTP: step 1/1. Its pathway is bacterial outer membrane biogenesis; lipopolysaccharide biosynthesis. Its function is as follows. Activates KDO (a required 8-carbon sugar) for incorporation into bacterial lipopolysaccharide in Gram-negative bacteria. This is 3-deoxy-manno-octulosonate cytidylyltransferase from Aquifex aeolicus (strain VF5).